Here is a 374-residue protein sequence, read N- to C-terminus: Mitochondrial inner membrane protein oxa1-1 (374 aa).

A helical transmembrane segment spans residues 77-97 (TINVYAGAPWWVSIILTTLGV). Residues 98–159 (RLALTPVMIA…GIYLKHNVNP (62 aa)) are Mitochondrial intermembrane-facing. Residues 160-180 (FAIFILPLTQSAVFFSFFYAI) traverse the membrane as a helical segment. Residues 181 to 242 (RKMSRLSVDG…TIGNSTNWRT (62 aa)) lie on the Mitochondrial matrix side of the membrane. Residues 243-263 (FFFLCCLLSPLLTAKLPAAIF) traverse the membrane as a helical segment. The Mitochondrial intermembrane segment spans residues 264–374 (MYWIPSSLFN…SKKNSKKQSN (111 aa)).

Belongs to the OXA1/ALB3/YidC family.

The protein resides in the mitochondrion inner membrane. In terms of biological role, required for the insertion of integral membrane proteins into the mitochondrial inner membrane. Essential for the activity and assembly of cytochrome c oxidase. Not essential for viability, while oxa102 is essential. When both genes are deleted the cell is non-viable, suggesting that oxa101 act as a back-up for oxa102. The chain is Mitochondrial inner membrane protein oxa1-1 (oxa101) from Schizosaccharomyces pombe (strain 972 / ATCC 24843) (Fission yeast).